The chain runs to 265 residues: Deoxycytidine kinase 1 (265 aa).

30–38 (GNIAAGKST) contacts ATP. The substrate site is built by Glu55, Tyr88, and Gln99. Glu129 serves as the catalytic Proton acceptor. Residues Arg130 and Asp135 each coordinate substrate. 190 to 194 (RVYTR) is a binding site for ATP. Glu199 contacts substrate. ATP is bound at residue 242–244 (EDF).

It belongs to the DCK/DGK family. In terms of assembly, homodimer.

The protein resides in the nucleus. The catalysed reaction is 2'-deoxycytidine + a ribonucleoside 5'-triphosphate = dCMP + a ribonucleoside 5'-diphosphate + H(+). It carries out the reaction 2'-deoxyguanosine + ATP = dGMP + ADP + H(+). The enzyme catalyses 2'-deoxyadenosine + ATP = dAMP + ADP + H(+). Phosphorylates the deoxyribonucleosides deoxyadenosine, deoxycytidine and deoxyguanosine with highest activity against deoxycytidine followed by deadenosine and deoxyguanosine. Shows only very minor activity against deoxyuridine and deoxythymidine. This chain is Deoxycytidine kinase 1, found in Xenopus laevis (African clawed frog).